The sequence spans 283 residues: 2-dehydro-3-deoxyphosphooctonate aldolase (283 aa).

Belongs to the KdsA family.

It is found in the cytoplasm. It carries out the reaction D-arabinose 5-phosphate + phosphoenolpyruvate + H2O = 3-deoxy-alpha-D-manno-2-octulosonate-8-phosphate + phosphate. Its pathway is carbohydrate biosynthesis; 3-deoxy-D-manno-octulosonate biosynthesis; 3-deoxy-D-manno-octulosonate from D-ribulose 5-phosphate: step 2/3. It functions in the pathway bacterial outer membrane biogenesis; lipopolysaccharide biosynthesis. The polypeptide is 2-dehydro-3-deoxyphosphooctonate aldolase (Methylococcus capsulatus (strain ATCC 33009 / NCIMB 11132 / Bath)).